The following is a 95-amino-acid chain: Ferredoxin-like protein FixX (95 aa).

The protein belongs to the bacterial-type ferredoxin family. FixX subfamily.

Could be part of an electron transfer system required for anaerobic carnitine reduction. Could be a 3Fe-4S cluster-containing protein. The protein is Ferredoxin-like protein FixX (fixX) of Salmonella typhimurium (strain LT2 / SGSC1412 / ATCC 700720).